The following is a 400-amino-acid chain: Sphingosine 1-phosphate receptor 5 (400 aa).

Topologically, residues 1-41 (MEPGLLRPAPVSEVIVLHYNYTGKLRGARYQPGAGLRADAA) are extracellular. Asn20 is a glycosylation site (N-linked (GlcNAc...) asparagine). A helical membrane pass occupies residues 42 to 62 (VCLAVCAFIVLENLAVLLVLV). The Cytoplasmic segment spans residues 63-68 (RHPRFH). A helical transmembrane segment spans residues 69–89 (APMFLLLGSLTLSDLLAGAAY). Over 90–111 (ATNILLSGPLTLRLSPALWFAR) the chain is Extracellular. Residues 112–132 (EGGVFVALAASVLSLLAIALE) form a helical membrane-spanning segment. The Cytoplasmic portion of the chain corresponds to 133 to 151 (RHLTMARRGPAPAASRART). The chain crosses the membrane as a helical span at residues 152-172 (LAMAVAAWGASLLLGLLPALG). Residues 173-192 (WNCLGRLETCSTVLPLYAKA) lie on the Extracellular side of the membrane. The helical transmembrane segment at 193–213 (YVLFCVLAFLGILAAICALYA) threads the bilayer. Residues 214 to 253 (RIYCQVRANARRLRAGPGSRRATSSSRSRHTPRSLALLRT) lie on the Cytoplasmic side of the membrane. The helical transmembrane segment at 254–274 (LSVVLLAFVACWGPLFLLLLL) threads the bilayer. The Extracellular segment spans residues 275-288 (DVACPARACPVLLQ). A helical membrane pass occupies residues 289–309 (ADPFLGLAMANSLLNPIIYTF). Topologically, residues 310–400 (TNRDLRHALL…NRSLVPTATD (91 aa)) are cytoplasmic. Cys324 is lipidated: S-palmitoyl cysteine. Residues 331 to 400 (QDSSNSLQRS…NRSLVPTATD (70 aa)) form a disordered region. Phosphoserine is present on residues Ser340, Ser342, and Ser384. Over residues 360–400 (DRSSSPSEHLSPQQDGVDTSCSTGSPGVATANRSLVPTATD) the composition is skewed to polar residues.

It belongs to the G-protein coupled receptor 1 family. Expressed in spleen and brain. In the CNS expression is restricted to oligodendrocytes.

The protein resides in the cell membrane. Receptor for the lysosphingolipid sphingosine 1-phosphate (S1P). S1P is a bioactive lysophospholipid that elicits diverse physiological effect on most types of cells and tissues. Is coupled to both the G(i/0)alpha and G(12) subclass of heteromeric G-proteins. S1P activation on oligodendroglial cells modulates two distinct functional pathways mediating either process retraction or cell survival. S1P activation on O4-positive pre-oligodendrocytes induces process retraction via a Rho kinase/collapsin response-mediated protein signaling pathway. The S1P-induced survival of mature oligodendrocytes is mediated through a pertussis toxin-sensitive, Akt-dependent pathway. S1P activation on oligodendroglial cells modulates two distinct functional pathways mediating either process retraction or cell survival. These effects depend on the developmental stage of the cell. This Mus musculus (Mouse) protein is Sphingosine 1-phosphate receptor 5 (S1pr5).